Here is a 337-residue protein sequence, read N- to C-terminus: tRNA N6-adenosine threonylcarbamoyltransferase (337 aa).

Fe cation-binding residues include H111 and H115. Residues L134–G138, D167, G180, and N272 each bind substrate. Residue D300 participates in Fe cation binding.

This sequence belongs to the KAE1 / TsaD family. Fe(2+) serves as cofactor.

Its subcellular location is the cytoplasm. It catalyses the reaction L-threonylcarbamoyladenylate + adenosine(37) in tRNA = N(6)-L-threonylcarbamoyladenosine(37) in tRNA + AMP + H(+). In terms of biological role, required for the formation of a threonylcarbamoyl group on adenosine at position 37 (t(6)A37) in tRNAs that read codons beginning with adenine. Is involved in the transfer of the threonylcarbamoyl moiety of threonylcarbamoyl-AMP (TC-AMP) to the N6 group of A37, together with TsaE and TsaB. TsaD likely plays a direct catalytic role in this reaction. The chain is tRNA N6-adenosine threonylcarbamoyltransferase from Erwinia tasmaniensis (strain DSM 17950 / CFBP 7177 / CIP 109463 / NCPPB 4357 / Et1/99).